A 212-amino-acid polypeptide reads, in one-letter code: uncharacterized protein (212 aa).

The next 4 membrane-spanning stretches (helical) occupy residues 20-40 (FLIGFFTEYGYWAVLFVLIIC), 70-90 (LMLLVSMIGVLAGDSCMYWLG), 155-175 (FVLIDFCAAIISVPIWIYLGE), and 192-212 (QIVIYIFIGYLYYSFLEMEKI).

This sequence belongs to the DedA family.

It is found in the cell membrane. This is an uncharacterized protein from Haemophilus influenzae (strain ATCC 51907 / DSM 11121 / KW20 / Rd).